The chain runs to 144 residues: MSHNSQAFLSTNAGLPPSYETIKEEYGVTELGEPSNSAVVRTTVINMPREVSVPDHVVWSLFNTLFFNACCLGFVAYAYSVKSRDRKMVGDVVGAQAYASTAKCLNISSLIFSILMVIICIIIFSTTSVVVFQSFAQRTPHSGF.

Met-1 carries the post-translational modification N-acetylmethionine. Residues 1–56 (MSHNSQAFLSTNAGLPPSYETIKEEYGVTELGEPSNSAVVRTTVINMPREVSVPDH) lie on the Cytoplasmic side of the membrane. Tyr-19 carries the post-translational modification Phosphotyrosine. An intramembrane region (helical) is located at residues 57–77 (VVWSLFNTLFFNACCLGFVAY). Residues Cys-70, Cys-71, and Cys-104 are each lipidated (S-palmitoyl cysteine). The Cytoplasmic portion of the chain corresponds to 78–110 (AYSVKSRDRKMVGDVVGAQAYASTAKCLNISSL). The chain crosses the membrane as a helical span at residues 111-131 (IFSILMVIICIIIFSTTSVVV). The Extracellular portion of the chain corresponds to 132-144 (FQSFAQRTPHSGF).

Belongs to the CD225/Dispanin family. Interacts with CD81. In terms of processing, palmitoylation on membrane-proximal cysteines controls clustering in membrane compartments and antiviral activity. Phosphorylation at Tyr-19 is required for endosomal and lysosomal location. Predominantly expressed in nascent primordial germ cells, as well as in gonadal germ cells.

It localises to the cell membrane. The protein resides in the lysosome membrane. Its subcellular location is the late endosome membrane. In terms of biological role, IFN-induced antiviral protein which inhibits the entry of viruses to the host cell cytoplasm, permitting endocytosis, but preventing subsequent viral fusion and release of viral contents into the cytosol. Active against multiple viruses, including influenza A virus, SARS coronavirus (SARS-CoV), Marburg virus (MARV) and Ebola virus (EBOV), Dengue virus (DNV) and West Nile virus (WNV). Can inhibit: influenza virus hemagglutinin protein-mediated viral entry, MARV and EBOV GP1,2-mediated viral entry and SARS-CoV S protein-mediated viral entry. Induces cell cycle arrest and mediates apoptosis by caspase activation and in p53-independent manner. The sequence is that of Interferon-induced transmembrane protein 2 (Ifitm2) from Mus musculus (Mouse).